Here is a 99-residue protein sequence, read N- to C-terminus: IEILLGGDDGSLAFVPNNFTVASGEKITFKNNAGFPHNVVFDEDEIPSGVDSGKISMNEEDLLBAPGZVYZVZLTZKGSYSFYCSPHQGAGMVGKVTVN.

The Plastocyanin-like domain occupies 1 to 99; it reads IEILLGGDDG…AGMVGKVTVN (99 aa). 4 residues coordinate Cu cation: H37, C84, H87, and M92.

It belongs to the plastocyanin family. Requires Cu(2+) as cofactor.

It is found in the plastid. The protein resides in the chloroplast thylakoid membrane. In terms of biological role, participates in electron transfer between P700 and the cytochrome b6-f complex in photosystem I. This Cucumis sativus (Cucumber) protein is Plastocyanin (PETE).